Here is a 284-residue protein sequence, read N- to C-terminus: 4-diphosphocytidyl-2-C-methyl-D-erythritol kinase (284 aa).

Lysine 10 is an active-site residue. 95–105 (PVAAGLGGGSS) lines the ATP pocket. Residue aspartate 137 is part of the active site.

It belongs to the GHMP kinase family. IspE subfamily.

It carries out the reaction 4-CDP-2-C-methyl-D-erythritol + ATP = 4-CDP-2-C-methyl-D-erythritol 2-phosphate + ADP + H(+). The protein operates within isoprenoid biosynthesis; isopentenyl diphosphate biosynthesis via DXP pathway; isopentenyl diphosphate from 1-deoxy-D-xylulose 5-phosphate: step 3/6. Functionally, catalyzes the phosphorylation of the position 2 hydroxy group of 4-diphosphocytidyl-2C-methyl-D-erythritol. The polypeptide is 4-diphosphocytidyl-2-C-methyl-D-erythritol kinase (Levilactobacillus brevis (strain ATCC 367 / BCRC 12310 / CIP 105137 / JCM 1170 / LMG 11437 / NCIMB 947 / NCTC 947) (Lactobacillus brevis)).